The sequence spans 102 residues: Redox- and pH-responsive transcriptional regulator WhiB3 (102 aa).

Positions 22-86 (LCRGMDSSMF…GGLSESERDL (65 aa)) constitute a 4Fe-4S Wbl-type domain. [4Fe-4S] cluster is bound by residues Cys23, Cys53, Cys56, and Cys62.

Belongs to the WhiB family. Homodimer. Interacts with the C-terminal 54 residues of sigma factor SigA (RpoV). It depends on [4Fe-4S] cluster as a cofactor. The 4Fe-4S cluster interacts with NO, forming a protein-bound dinitrosyliron dithiol complex. In terms of processing, the 4Fe-4S cluster interacts with O(2), leading to its degradation. Cluster loss takes about 2 hours. Once in the apo-form the cysteines oxidize to form 2 intramolecular disulfide bonds.

The protein localises to the cytoplasm. In terms of biological role, a redox-sensitive transcriptional regulator. Maintains intracellular redox homeostasis by regulating catabolic metabolism and polyketide biosynthesis. Regulates expression of the redox buffer ergothioneine (ERG) in a carbon-source-dependent manner; loss of ERG or mycothiol (MSH, the other major redox buffer in this bacteria) leads to respiratory alterations and bioenergetic deficiencies that negatively impact virulence. In response to low external pH (like that found in host macrophage phagosomes) alters endogenous gene expression leading to acid resistance; MSH and WhiB3 are probably part of a regulatory circuit that mediates gene expression upon acid stress. Regulates pathogenic lipid synthesis, coordinating proprionate flux (and other host-derived fatty acid oxidation intermediates) into methyl-branched fatty acids (polyacyltrehalose, phthiocerol dimycocerosates, sulfolipids) and the storage lipid triacylglycerol, functioning as reductive sink. During intracellular growth M.tuberculosis uses host fatty acids as an energy source, generating large quantities of proprionate and NADH/NADPH, which are toxic and highly reducing respectively. WhiB3 is thought to help dissipate proprionate and NADH/NADPH by switching to the in vivo carbon source and via lipid anabolism. Responds to NO and O(2). Regulates expression of genes encoding modular polyketide synthases such as pks2, pks3 and fbpA. The oxidized apo-form of WhiB3 binds DNA (with 2 intramolecular disulfide bonds); holo-WhiB3 (with the 4Fe-4S cluster) binds DNA considerably less well. Discriminates poorly between specific and non-specific DNA-binding. Plays a role in virulence and nutritional stress. In its apo-form can act as a protein disulfide reductase. Functionally, may respond to mycothiol (MSH) redox potential (E-MSH) which decreases at pH 4.5 for up to 72 hours, indicative of cellular reductive stress; deletion of whiB3 leads to a lesser E-MSH at 72 hours, indicative of cellular oxidative stress. Probably via its effects on production of polyketide lipids, regulates host gene expression, leading to blockage of phagosome maturation. Equilibration of extra- and intracytoplasmic pH kills bacteria. This Mycobacterium tuberculosis (strain ATCC 25618 / H37Rv) protein is Redox- and pH-responsive transcriptional regulator WhiB3 (whiB3).